The chain runs to 939 residues: Zinc finger RNA-binding protein 2 (939 aa).

Disordered regions lie at residues 1-72 (MATS…AYGS), 116-185 (GRMT…IVTS), 217-264 (FYPP…PKAG), 289-314 (HLGGQKHRKKEAAQKTGVQPNGSPRG), 360-389 (LEPALATESPPGAEAKPTSPTGPSVCASSR), 401-449 (ALCE…DAQP), 545-590 (RLEE…SSDD), and 906-939 (RLGARFRKRQRGPGEGEEGAGEKKRGRRGGEGLV). Polar residues-rich tracts occupy residues 137–147 (PHGSHSHAQPP) and 157–184 (QPASTLSSGYTYPTATGVQPESSASIVT). Over residues 217–239 (FYPPAQPPPPPGPPQQLPPPPAP) the composition is skewed to pro residues. The stretch at 516–549 (KVLEERMRKQRHLAEERLEQLRRWHAERRRLEEE) forms a coiled coil. Positions 570–935 (RPESPASAPL…GEKKRGRRGG (366 aa)) constitute a DZF domain. A compositionally biased stretch (basic residues) spans 906–916 (RLGARFRKRQR).

The polypeptide is Zinc finger RNA-binding protein 2 (ZFR2) (Homo sapiens (Human)).